Consider the following 450-residue polypeptide: Probable glucoamylase (450 aa).

A signal peptide spans 1 to 16; it reads MRTYWLFLLLGGVVSA. The propeptide occupies 17–28; that stretch reads ESLLSPNKRSKE. W147 is a substrate binding site. Residue D203 is the Proton acceptor of the active site. E206 (proton donor) is an active-site residue. N-linked (GlcNAc...) asparagine glycosylation is found at N383 and N409.

It belongs to the glycosyl hydrolase 15 family.

It carries out the reaction Hydrolysis of terminal (1-&gt;4)-linked alpha-D-glucose residues successively from non-reducing ends of the chains with release of beta-D-glucose.. This chain is Probable glucoamylase (meu17), found in Schizosaccharomyces pombe (strain 972 / ATCC 24843) (Fission yeast).